A 205-amino-acid polypeptide reads, in one-letter code: N-(5'-phosphoribosyl)anthranilate isomerase (205 aa).

It belongs to the TrpF family.

It carries out the reaction N-(5-phospho-beta-D-ribosyl)anthranilate = 1-(2-carboxyphenylamino)-1-deoxy-D-ribulose 5-phosphate. It functions in the pathway amino-acid biosynthesis; L-tryptophan biosynthesis; L-tryptophan from chorismate: step 3/5. The chain is N-(5'-phosphoribosyl)anthranilate isomerase from Thermotoga neapolitana (strain ATCC 49049 / DSM 4359 / NBRC 107923 / NS-E).